Here is a 201-residue protein sequence, read N- to C-terminus: Eukaryotic translation initiation factor 4E-5 (201 aa).

C122 and C126 form a disulfide bridge.

The protein belongs to the eukaryotic initiation factor 4E family. EIF4F is a multi-subunit complex, the composition of which varies with external and internal environmental conditions. It is composed of at least eIF4A, eIF4E and eIF4G. eIF4E is also known to interact with other partners. Enriched in the germline.

Its function is as follows. Recognizes and binds the 7-methylguanosine-containing mRNA cap during an early step in the initiation of protein synthesis and facilitates ribosome binding by inducing the unwinding of the mRNAs secondary structures. All 5 eIF4E proteins bind monomethyl cap structures. Only ife-1, ife-2 and ife-5 bind trimethyl cap structures which result from trans-splicing. Translation of trimethyl cap structure mRNAs may be regulated by intracellular redox state; disulfide bonds change the width and depth of the cap-binding cavity determining selectivity to mRNA caps. The sequence is that of Eukaryotic translation initiation factor 4E-5 (ife-5) from Caenorhabditis elegans.